Consider the following 337-residue polypeptide: HTH-type transcriptional regulator MalR (337 aa).

The 56-residue stretch at 1-56 (MVTIKDIAQAANVSTSTVSRVISGNPRISMQTREKVKATMKSFNYQPNRAARTLAT) folds into the HTH lacI-type domain. Positions 4–23 (IKDIAQAANVSTSTVSRVIS) form a DNA-binding region, H-T-H motif.

In terms of biological role, transcriptional repressor of the malA gene for maltase. This Staphylococcus xylosus protein is HTH-type transcriptional regulator MalR (malR).